The sequence spans 58 residues: Metallothionein (58 aa).

A beta region spans residues 1–29 (MPDPCCIDKCECKEGGCKAGCKCTSCRCT). Residues cysteine 5, cysteine 6, cysteine 10, cysteine 12, cysteine 17, cysteine 21, cysteine 23, cysteine 26, cysteine 28, cysteine 31, cysteine 34, cysteine 38, cysteine 40, cysteine 46, cysteine 50, cysteine 54, cysteine 56, and cysteine 57 each contribute to the a divalent metal cation site. Residues 30 to 58 (PCEKCSSGCKCTTKEDCCKTCTKPCSCCP) are alpha.

This sequence belongs to the metallothionein superfamily. Type 3 family.

Functionally, metallothioneins have a high content of cysteine residues that bind various heavy metals. Class I MTS in marine crustacea are involved in the sequestration of elevated levels of heavy-metal ions. This chain is Metallothionein, found in Carcinus maenas (Common shore crab).